The primary structure comprises 199 residues: Probable GTP-binding protein EngB (199 aa).

An EngB-type G domain is found at 22–195; sequence QLPEIALSGR…WEWIEQQCDI (174 aa). Residues 30 to 37, 57 to 61, 75 to 78, 142 to 145, and 174 to 176 each bind GTP; these read GRSNVGKS, GKTQT, DVPG, TKMD, and FSA. Mg(2+) contacts are provided by Ser37 and Thr59.

It belongs to the TRAFAC class TrmE-Era-EngA-EngB-Septin-like GTPase superfamily. EngB GTPase family. Mg(2+) is required as a cofactor.

Functionally, necessary for normal cell division and for the maintenance of normal septation. The chain is Probable GTP-binding protein EngB from Latilactobacillus sakei subsp. sakei (strain 23K) (Lactobacillus sakei subsp. sakei).